The primary structure comprises 270 residues: MLRAVLLPTLLAFGAFTPVHGANSPGCGKQPTLTNGVNQINGREYVLKIPDGYDPSKPHHLIFGLHWRGGNMYNVVNGDSIQPWYGLEARAQGSAIFVAPNGLNAGWANTNGEDVAFIDAIMEQVEDDLCVDQASRFATGFSWGGGMSYALACARAAEFRAVSVLSGGLISGCDGGNDPIAYLGIHGINDPVLPLDGGVTLANTFVSNNGCQPTDIGQPASGSGGSVRTDFSGCSHPVSFIAYDGGHDGAPLGVGSSLAPDATWEFFMAA.

The signal sequence occupies residues 1 to 21 (MLRAVLLPTLLAFGAFTPVHG).

Belongs to the faeC family.

The protein resides in the secreted. The enzyme catalyses feruloyl-polysaccharide + H2O = ferulate + polysaccharide.. Functionally, involved in degradation of plant cell walls. Hydrolyzes the feruloyl-arabinose ester bond in arabinoxylans, and the feruloyl-galactose ester bond in pectin. Active against paranitrophenyl-acetate, methyl ferulate and wheat arabinoxylan. The chain is Feruloyl esterase C (faeC) from Emericella nidulans (strain FGSC A4 / ATCC 38163 / CBS 112.46 / NRRL 194 / M139) (Aspergillus nidulans).